The sequence spans 136 residues: uncharacterized protein (136 aa).

Residues 1–19 form the signal peptide; sequence MKKLLMVILGIALIGMAYA.

This is an uncharacterized protein from Methanocaldococcus jannaschii (strain ATCC 43067 / DSM 2661 / JAL-1 / JCM 10045 / NBRC 100440) (Methanococcus jannaschii).